The chain runs to 353 residues: Guanine nucleotide-binding protein G(q) subunit alpha (353 aa).

Residues Cys-3 and Cys-4 are each lipidated (S-palmitoyl cysteine). Residues 32–353 (RELKLLLLGT…QLNLKEYNLV (322 aa)) form the G-alpha domain. The G1 motif stretch occupies residues 35 to 48 (KLLLLGTGESGKST). Residues 40–47 (GTGESGKS), 174–180 (LRVRVPT), 199–203 (DVGGQ), 268–271 (NKKD), and Ala-325 contribute to the GTP site. The Mg(2+) site is built by Ser-47 and Thr-180. Residues 172 to 180 (DILRVRVPT) form a G2 motif region. Residues 195–204 (FRMVDVGGQR) are G3 motif. Residues 264-271 (ILFLNKKD) are G4 motif. Residues 323–328 (TCATDT) form a G5 motif region.

This sequence belongs to the G-alpha family. G(q) subfamily. As to quaternary structure, g proteins are composed of 3 units; alpha, beta and gamma. The alpha chain contains the guanine nucleotide binding site.

Functionally, guanine nucleotide-binding proteins (G proteins) are involved as modulators or transducers in various transmembrane signaling systems. The sequence is that of Guanine nucleotide-binding protein G(q) subunit alpha (SCGQA) from Mizuhopecten yessoensis (Japanese scallop).